The sequence spans 146 residues: VHWSAEEKQLITGLWGKVNVADCGAEALARLLIVYPWTQRFFSSFGNLSSPTAILGNPMVRAHGKKVLTSFGDAVKNLDNIKNTFAQLSELHCDKLHVDPENFRLLGDILIIVLAAHFAKEFTPDCQAAWQKLVRVVAHALARKYH.

The Globin domain maps to 2 to 146; sequence HWSAEEKQLI…VAHALARKYH (145 aa). Heme b-binding residues include His63 and His92.

The protein belongs to the globin family. As to quaternary structure, heterotetramer of two alpha chains and two beta chains. In terms of tissue distribution, red blood cells.

Its function is as follows. Involved in oxygen transport from the lung to the various peripheral tissues. The chain is Hemoglobin subunit beta (HBB) from Anser indicus (Bar-headed goose).